The primary structure comprises 1413 residues: DNA-directed RNA polymerase subunit beta' (1413 aa).

Positions 70, 72, 85, and 88 each coordinate Zn(2+). Residues aspartate 460, aspartate 462, and aspartate 464 each coordinate Mg(2+). Positions 814, 888, 895, and 898 each coordinate Zn(2+).

Belongs to the RNA polymerase beta' chain family. In terms of assembly, the RNAP catalytic core consists of 2 alpha, 1 beta, 1 beta' and 1 omega subunit. When a sigma factor is associated with the core the holoenzyme is formed, which can initiate transcription. Mg(2+) serves as cofactor. Requires Zn(2+) as cofactor.

The catalysed reaction is RNA(n) + a ribonucleoside 5'-triphosphate = RNA(n+1) + diphosphate. Functionally, DNA-dependent RNA polymerase catalyzes the transcription of DNA into RNA using the four ribonucleoside triphosphates as substrates. In Bordetella avium (strain 197N), this protein is DNA-directed RNA polymerase subunit beta'.